The chain runs to 150 residues: Transcriptional repressor NrdR (150 aa).

A disordered region spans residues 1–22 (MKCPYCSAPDSRVVNSRPSDDG). A zinc finger spans residues 3-34 (CPYCSAPDSRVVNSRPSDDGASIRRRRECLRC). One can recognise an ATP-cone domain in the interval 49–136 (LMVLKRGGQR…VYRDFDSLER (88 aa)).

This sequence belongs to the NrdR family. Zn(2+) serves as cofactor.

Its function is as follows. Negatively regulates transcription of bacterial ribonucleotide reductase nrd genes and operons by binding to NrdR-boxes. The polypeptide is Transcriptional repressor NrdR (Deinococcus geothermalis (strain DSM 11300 / CIP 105573 / AG-3a)).